We begin with the raw amino-acid sequence, 687 residues long: Phenylalanine aminomutase (L-beta-phenylalanine forming) (687 aa).

Catalysis depends on Tyr80, which acts as the Proton donor/acceptor. Positions 175-177 (ASG) form a cross-link, 5-imidazolinone (Ala-Gly). A 2,3-didehydroalanine (Ser) modification is found at Ser176. (E)-cinnamate contacts are provided by Asn231, Gln319, Arg325, Asn355, Lys427, Glu455, and Asn458.

Belongs to the PAL/histidase family. As to quaternary structure, homodimer. Homotetramer, dimer of dimers. In terms of processing, contains an active site 4-methylidene-imidazol-5-one (MIO), which is formed autocatalytically by cyclization and dehydration of residues Ala-Ser-Gly.

The protein localises to the cytoplasm. The catalysed reaction is L-phenylalanine = L-beta-phenylalanine. It carries out the reaction L-phenylalanine = (E)-cinnamate + NH4(+). It functions in the pathway alkaloid biosynthesis; taxol biosynthesis. Its pathway is phenylpropanoid metabolism; trans-cinnamate biosynthesis; trans-cinnamate from L-phenylalanine: step 1/1. Phenylalanine aminomutase that catalyzes the rearrangement of L-phenylalanine to R-beta-phenylalanine. Catalyzes the first committed step in the biosynthesis of the side chain of the alkaloid taxol (paclitaxel), a widely-used compound with antitumor activity. Also has low phenylalanine ammonia-lyase activity and can catalyze the amination of trans-cinnamate. This is Phenylalanine aminomutase (L-beta-phenylalanine forming) (pam) from Taxus chinensis (Chinese yew).